Here is a 126-residue protein sequence, read N- to C-terminus: Aspartate 1-decarboxylase (126 aa).

Catalysis depends on Ser25, which acts as the Schiff-base intermediate with substrate; via pyruvic acid. Ser25 is modified (pyruvic acid (Ser)). Thr57 contacts substrate. The active-site Proton donor is Tyr58. Residue 73–75 (GAA) coordinates substrate.

Belongs to the PanD family. Heterooctamer of four alpha and four beta subunits. Requires pyruvate as cofactor. In terms of processing, is synthesized initially as an inactive proenzyme, which is activated by self-cleavage at a specific serine bond to produce a beta-subunit with a hydroxyl group at its C-terminus and an alpha-subunit with a pyruvoyl group at its N-terminus.

The protein resides in the cytoplasm. The enzyme catalyses L-aspartate + H(+) = beta-alanine + CO2. It participates in cofactor biosynthesis; (R)-pantothenate biosynthesis; beta-alanine from L-aspartate: step 1/1. Its function is as follows. Catalyzes the pyruvoyl-dependent decarboxylation of aspartate to produce beta-alanine. The chain is Aspartate 1-decarboxylase from Pseudomonas aeruginosa (strain LESB58).